The chain runs to 221 residues: Ribosomal RNA small subunit methyltransferase G (221 aa).

S-adenosyl-L-methionine contacts are provided by residues Gly83, Phe88, 132–133, and Arg146; that span reads LE.

It belongs to the methyltransferase superfamily. RNA methyltransferase RsmG family.

It localises to the cytoplasm. It catalyses the reaction guanosine(527) in 16S rRNA + S-adenosyl-L-methionine = N(7)-methylguanosine(527) in 16S rRNA + S-adenosyl-L-homocysteine. In terms of biological role, specifically methylates the N7 position of guanine in position 527 of 16S rRNA. The chain is Ribosomal RNA small subunit methyltransferase G from Zymomonas mobilis subsp. mobilis (strain ATCC 31821 / ZM4 / CP4).